A 655-amino-acid chain; its full sequence is RalA-binding protein 1 (655 aa).

The segment at methionine 1 to aspartate 158 is disordered. At threonine 2 the chain carries N-acetylthreonine. The span at leucine 24 to isoleucine 33 shows a compositional bias: polar residues. Serine 29, serine 30, and serine 34 each carry phosphoserine. Threonine 44 bears the Phosphothreonine mark. Serine 48 and serine 62 each carry phosphoserine. The span at aspartate 52–histidine 68 shows a compositional bias: basic and acidic residues. Glycine 69–lysine 74 contacts ATP. Positions glycine 69–glutamate 79 are enriched in basic residues. Serine 92 and serine 93 each carry phosphoserine. The segment covering lysine 102–serine 118 has biased composition (basic residues). The segment at lysine 102–lysine 119 is nuclear localization signal. The span at lysine 119 to threonine 155 shows a compositional bias: basic and acidic residues. Residues leucine 154 to tyrosine 219 form a mediates association with membranes and could form transmembrane domains region. Positions isoleucine 192 to leucine 380 constitute a Rho-GAP domain. The interval arginine 403–methionine 499 is mediates interaction with RALA and RALB. ATP is bound at residue glycine 418–lysine 425. Residues serine 461 and serine 463 each carry the phosphoserine modification. The interval glutamate 500–isoleucine 655 is mediates interaction with REPS1 and REPS2. 2 disordered regions span residues glutamine 525–glutamate 551 and alanine 601–isoleucine 655. A compositionally biased stretch (acidic residues) spans glutamate 536–glutamate 551. The span at glycine 624–isoleucine 655 shows a compositional bias: basic and acidic residues. A Phosphoserine modification is found at serine 645.

As to quaternary structure, interacts with the GTP-bound form of RALA (via effector domain); during mitosis, recruits RALBP1 to the mitochondrion where it promotes DNM1L phosphorylation and mitochondrial fission. Interacts with DNM1L; mediates its mitotic kinase cyclin B-CDK1-mediated phosphorylation during mitosis to promote mitochondrial fission. Interacts with the mitotic kinase cyclin B-CDK1 during mitosis. Interacts with the GTP-bound form of RALB (via effector domain). Interacts with REPS1; the interaction is direct and does not affect RALA-binding nor GTPase activator activity of RALBP1. Interacts with REPS2; the interaction is direct and does not affect RALA-binding nor GTPase activator activity of RALBP1. Interacts with EPN1, NUMB and TFAP2A during interphase and mitosis. Interacts with AP2M1; as part of the AP2 complex. Interacts with CDC42. Interacts with RAC1. In terms of processing, tyrosine-phosphorylated upon stimulation of cells with EGF. Post-translationally, may undergo proteolytic cleavage to give peptides which reassemble to form a transporter complex. Expressed ubiquitously but at low levels. Shows a strong expression in the erythrocytes.

The protein localises to the cell membrane. It localises to the cytoplasm. It is found in the cytosol. Its subcellular location is the cytoskeleton. The protein resides in the spindle pole. The protein localises to the nucleus. It localises to the mitochondrion. It carries out the reaction an S-substituted glutathione(in) + ATP + H2O = an S-substituted glutathione(out) + ADP + phosphate + H(+). It catalyses the reaction ATP + H2O + xenobioticSide 1 = ADP + phosphate + xenobioticSide 2.. The enzyme catalyses leukotriene C4(in) + ATP + H2O = leukotriene C4(out) + ADP + phosphate + H(+). Functionally, multifunctional protein that functions as a downstream effector of RALA and RALB. As a GTPase-activating protein/GAP can inactivate CDC42 and RAC1 by stimulating their GTPase activity. As part of the Ral signaling pathway, may also regulate ligand-dependent EGF and insulin receptors-mediated endocytosis. During mitosis, may act as a scaffold protein in the phosphorylation of EPSIN/EPN1 by the mitotic kinase cyclin B-CDK1, preventing endocytosis during that phase of the cell cycle. During mitosis, also controls mitochondrial fission as an effector of RALA. Recruited to mitochondrion by RALA, acts as a scaffold to foster the mitotic kinase cyclin B-CDK1-mediated phosphorylation and activation of DNM1L. In terms of biological role, could also function as a primary ATP-dependent active transporter for glutathione conjugates of electrophiles. May also actively catalyze the efflux of a wide range of substrates including xenobiotics like doxorubicin (DOX) contributing to cell multidrug resistance. This chain is RalA-binding protein 1, found in Homo sapiens (Human).